Consider the following 309-residue polypeptide: Putative lipid kinase YtlR (309 aa).

The DAGKc domain occupies 1–134 (MSHWFFIINP…FHLGSVNFLQ (134 aa)). Residues 9–13 (NPTAG), threonine 40, and 69–75 (GDGTMHE) each bind ATP. Asparagine 229, glutamate 232, and threonine 234 together coordinate Mg(2+). The active-site Proton acceptor is the glutamate 289.

It belongs to the diacylglycerol/lipid kinase family. Mg(2+) serves as cofactor.

Functionally, may catalyze the ATP-dependent phosphorylation of lipids other than diacylglycerol (DAG). In fact, is not able to exhibit diacylglycerol kinase activity in vitro. In Bacillus subtilis (strain 168), this protein is Putative lipid kinase YtlR (ytlR).